A 179-amino-acid polypeptide reads, in one-letter code: Ubiquitin-conjugating enzyme E2 2 (179 aa).

Residues 1 to 28 form a disordered region; that stretch reads MSTPARRRLMRDFKRMQQDPPSGVSASP. In terms of domain architecture, UBC core spans 4 to 150; it reads PARRRLMRDF…VRETVENSWN (147 aa). Cys88 acts as the Glycyl thioester intermediate in catalysis. Positions 145–179 are disordered; sequence VENSWNDDDDEEEEEEDEDEAEDEDDDDDDNIDED. Acidic residues predominate over residues 149–179; the sequence is WNDDDDEEEEEEDEDEAEDEDDDDDDNIDED. Positions 151 to 179 are acidic tail; it reads DDDDEEEEEEDEDEAEDEDDDDDDNIDED.

Belongs to the ubiquitin-conjugating enzyme family.

It localises to the cytoplasm. It is found in the nucleus. The enzyme catalyses S-ubiquitinyl-[E1 ubiquitin-activating enzyme]-L-cysteine + [E2 ubiquitin-conjugating enzyme]-L-cysteine = [E1 ubiquitin-activating enzyme]-L-cysteine + S-ubiquitinyl-[E2 ubiquitin-conjugating enzyme]-L-cysteine.. The protein operates within protein modification; protein ubiquitination. Catalyzes the covalent attachment of ubiquitin to other proteins. Plays a role in transcription regulation by catalyzing the monoubiquitination of histone H2B to form H2BK123ub1. H2BK123ub1 gives a specific tag for epigenetic transcriptional activation and is also a prerequisite for H3K4me and H3K79me formation. Also involved in postreplication repair of UV-damaged DNA, in N-end rule-dependent protein degradation and in sporulation. This is Ubiquitin-conjugating enzyme E2 2 (UBC2) from Candida albicans (strain SC5314 / ATCC MYA-2876) (Yeast).